The chain runs to 332 residues: GTP 3',8-cyclase (332 aa).

The 212-residue stretch at 9 to 220 (GYNRRVDYLR…TQVRERIAER (212 aa)) folds into the Radical SAM core domain. Position 18 (Arg18) interacts with GTP. 2 residues coordinate [4Fe-4S] cluster: Cys25 and Cys29. Tyr31 serves as a coordination point for S-adenosyl-L-methionine. Cys32 serves as a coordination point for [4Fe-4S] cluster. Residue Arg67 coordinates GTP. Position 71 (Gly71) interacts with S-adenosyl-L-methionine. Thr98 serves as a coordination point for GTP. An S-adenosyl-L-methionine-binding site is contributed by Ser122. Lys159 is a GTP binding site. Met193 serves as a coordination point for S-adenosyl-L-methionine. The [4Fe-4S] cluster site is built by Cys258 and Cys261. 263–265 (RVR) contacts GTP. Cys275 serves as a coordination point for [4Fe-4S] cluster.

The protein belongs to the radical SAM superfamily. MoaA family. In terms of assembly, monomer and homodimer. The cofactor is [4Fe-4S] cluster.

The catalysed reaction is GTP + AH2 + S-adenosyl-L-methionine = (8S)-3',8-cyclo-7,8-dihydroguanosine 5'-triphosphate + 5'-deoxyadenosine + L-methionine + A + H(+). It participates in cofactor biosynthesis; molybdopterin biosynthesis. Functionally, catalyzes the cyclization of GTP to (8S)-3',8-cyclo-7,8-dihydroguanosine 5'-triphosphate. This is GTP 3',8-cyclase from Pseudomonas fluorescens (strain Pf0-1).